Here is a 246-residue protein sequence, read N- to C-terminus: NAD(P)H-quinone oxidoreductase subunit K (246 aa).

4 residues coordinate [4Fe-4S] cluster: Cys62, Cys63, Cys127, and Cys158.

It belongs to the complex I 20 kDa subunit family. NDH-1 can be composed of about 15 different subunits; different subcomplexes with different compositions have been identified which probably have different functions. The cofactor is [4Fe-4S] cluster.

The protein resides in the cellular thylakoid membrane. It catalyses the reaction a plastoquinone + NADH + (n+1) H(+)(in) = a plastoquinol + NAD(+) + n H(+)(out). The enzyme catalyses a plastoquinone + NADPH + (n+1) H(+)(in) = a plastoquinol + NADP(+) + n H(+)(out). In terms of biological role, NDH-1 shuttles electrons from an unknown electron donor, via FMN and iron-sulfur (Fe-S) centers, to quinones in the respiratory and/or the photosynthetic chain. The immediate electron acceptor for the enzyme in this species is believed to be plastoquinone. Couples the redox reaction to proton translocation, and thus conserves the redox energy in a proton gradient. Cyanobacterial NDH-1 also plays a role in inorganic carbon-concentration. The chain is NAD(P)H-quinone oxidoreductase subunit K from Parasynechococcus marenigrum (strain WH8102).